The following is a 274-amino-acid chain: tRNA (mnm(5)s(2)U34)-methyltransferase, chloroplastic (274 aa).

A chloroplast-targeting transit peptide spans 1-50; the sequence is MAAGFFQAEMSILSSTLARSYSLPIRKTLMTFDFRIAMQRNPCLRIRRSC. 5 residues coordinate S-adenosyl-L-methionine: Asn108, Asn110, Asp134, Gln136, and His166.

This sequence belongs to the methyltransferase superfamily. MnmM family.

The protein localises to the plastid. It localises to the chloroplast. The enzyme catalyses 5-aminomethyl-2-thiouridine(34) in tRNA + S-adenosyl-L-methionine = 5-methylaminomethyl-2-thiouridine(34) in tRNA + S-adenosyl-L-homocysteine + H(+). It participates in tRNA modification. Functionally, involved in the biosynthesis of 5-methylaminomethyl-2-thiouridine (mnm(5)s(2)U) at the wobble position (U34) in tRNA. Catalyzes the transfer of a methyl group from S-adenosyl-L-methionine to nm(5)s(2)U34 to form mnm(5)s(2)U34. The polypeptide is tRNA (mnm(5)s(2)U34)-methyltransferase, chloroplastic (Arabidopsis thaliana (Mouse-ear cress)).